A 475-amino-acid chain; its full sequence is UDP-glycosyltransferase 708A6 (475 aa).

Residues Ser-286, Trp-348–Val-349, His-366–Glu-374, and Phe-388–Gln-391 contribute to the UDP-alpha-D-glucose site.

Belongs to the UDP-glycosyltransferase family. In terms of tissue distribution, expressed in radicles, hypocotyls and juvenile leaves. Expressed at low levels in roots.

Its function is as follows. Bifunctional glycosyltransferase that can produce both C- and O-glycosidated flavonoids. Converts 2-hydroxynaringenin to isovitexin. Converts eriodictyol to orientin and isoorientin. Converts naringenin and eriodictyol to naringenin 7-O-glucoside and eriodictyol 7-O-glucoside, respectively. This Zea mays (Maize) protein is UDP-glycosyltransferase 708A6.